The sequence spans 483 residues: Probable zinc metalloprotease PTRG_04977 (483 aa).

The N-terminal stretch at 1 to 18 is a signal peptide; sequence MLFRSALLSNVLLLPACA. 2 N-linked (GlcNAc...) asparagine glycosylation sites follow: N96 and N121. H167, D187, and E220 together coordinate Zn(2+). N-linked (GlcNAc...) asparagine glycosylation is present at N235. Residue D247 coordinates Zn(2+). N-linked (GlcNAc...) asparagine glycosylation is found at N310, N362, N401, N411, and N421. The Fibronectin type-III domain occupies 396 to 483; that stretch reads PAMPRNVTID…KSPAVYPFPG (88 aa).

This sequence belongs to the peptidase M28 family. M28B subfamily. Zn(2+) serves as cofactor.

Its subcellular location is the secreted. The sequence is that of Probable zinc metalloprotease PTRG_04977 from Pyrenophora tritici-repentis (strain Pt-1C-BFP) (Wheat tan spot fungus).